The following is a 779-amino-acid chain: MCYSRQAIPPPVPNRPGGTTNRGPPPLPPRANVQPPVCSSENSSKPRENRVAGESLRTPSSSNPLADSQVNSDNIFQSPVLSNLKAPPSVFNKVQHPVPKPNIDDQSVDPLETNKFYTNMLLDDNTQPIWTHPYSIWFSRDPELFGLAANHTLASQRVFDTTTNPPRFYFNPTNIKSFVFKAREFVSSNDIKLEFRDMKHMSMCLLMSLSSSQFIEFPLVQGMGFVTAIYHDLGFELRSAVGFRSLERISVNERYGKYNIQLENNRNWILYLTSPDYSFPQDFQISLLDSNTIISSHKINGLICQLSADSVPSIDMAAGCYPVYCDLSGQTVDEHFTNYRFNYTVAGYSQSGTTLMYALPHHKAAFTPEMQEREIASSLDSTVKGLMTGYLTNSFDMQVQVPQELGFEPVALSLNKKADYSQEKLSKIREAAVQEVQLSDPQQESNIDSMYFSGKILAKYAWILYVTHYILHDENLTKELLSKLTIAMERFISNQQVLPLNYDVSWKGIISSGSSSQDFGNSYYNDHHFHYSYHVITAAIISLVDSDLSGVTNNSWLENNRDWVECLIRDYSGVDNDDPYFPQFRSFDWFNGHSWAKGLFPSGDGKDEESTSEDVNSCYAIKLWGLVTGNSKLTDIANLQLGIMRNVFQSYFLYESNNTVQPKEFIGNKVSGILFENKIDHATYFGMEPQYIHMIHAIPITSASSWVRTPNFVKEEWEEKMQPIIDQVNDGWKGIIMLNMALLDPKFSYDFFSQPDFNRNFLDNGQSLTWSLAYSGAFS.

The interval 1-71 (MCYSRQAIPP…SNPLADSQVN (71 aa)) is disordered. Positions 57–71 (RTPSSSNPLADSQVN) are enriched in polar residues. The beta-sandwich subdomain stretch occupies residues 73-309 (DNIFQSPVLS…NGLICQLSAD (237 aa)). The GH81 domain maps to 73–779 (DNIFQSPVLS…WSLAYSGAFS (707 aa)). The alpha/beta subdomain stretch occupies residues 309-400 (DSVPSIDMAA…LTNSFDMQVQ (92 aa)). The segment at 375–779 (IASSLDSTVK…WSLAYSGAFS (405 aa)) is sufficient for catalytic activity. The (alpha/beta)6 barrel subdomain stretch occupies residues 415 to 779 (NKKADYSQEK…WSLAYSGAFS (365 aa)). Aspartate 526 is an active-site residue. (1,3-beta-D-glucosyl)n contacts are provided by histidine 530, aspartate 607, glutamate 609, and glutamate 613. Residues glutamate 609 and glutamate 613 contribute to the active site. The may provide specificity for triple-helical beta-glucan stretch occupies residues 678–680 (KID). Tyrosine 691 is a (1,3-beta-D-glucosyl)n binding site.

The protein belongs to the glycosyl hydrolase 81 family.

The protein localises to the cytoplasm. The enzyme catalyses Hydrolysis of (1-&gt;3)-beta-D-glucosidic linkages in (1-&gt;3)-beta-D-glucans.. Its activity is regulated as follows. Inhibited by mercury ions. In terms of biological role, cleaves internal linkages in 1,3-beta-glucan. In Saccharomyces cerevisiae (strain ATCC 204508 / S288c) (Baker's yeast), this protein is Glucan endo-1,3-beta-D-glucosidase 2.